Reading from the N-terminus, the 126-residue chain is Large ribosomal subunit protein bL12 (126 aa).

It belongs to the bacterial ribosomal protein bL12 family. In terms of assembly, homodimer. Part of the ribosomal stalk of the 50S ribosomal subunit. Forms a multimeric L10(L12)X complex, where L10 forms an elongated spine to which 2 to 4 L12 dimers bind in a sequential fashion. Binds GTP-bound translation factors.

Its function is as follows. Forms part of the ribosomal stalk which helps the ribosome interact with GTP-bound translation factors. Is thus essential for accurate translation. The chain is Large ribosomal subunit protein bL12 from Rhizobium meliloti (strain 1021) (Ensifer meliloti).